Here is a 101-residue protein sequence, read N- to C-terminus: MAQESNENGWGDFLELCSKIKTPEAFHDFFALFLTFGERESMASRFLIVQALLAEQLTQREIAQKYGVSIAQITRGSNALKAIDPKFKEFLKNLNRKYGNQ.

Residues 59–82 mediate DNA binding; that stretch reads QREIAQKYGVSIAQITRGSNALKA.

Belongs to the TrpR family. As to quaternary structure, homodimer.

The protein resides in the cytoplasm. Its function is as follows. This protein is an aporepressor. When complexed with L-tryptophan it binds the operator region of the trp operon and prevents the initiation of transcription. This Chlamydia caviae (strain ATCC VR-813 / DSM 19441 / 03DC25 / GPIC) (Chlamydophila caviae) protein is Trp operon repressor homolog.